A 768-amino-acid chain; its full sequence is Probable dipeptidyl peptidase 4 (768 aa).

A signal peptide spans 1–17 (MKLGKWSVLLLVGCTAA). Asparagine 38, asparagine 81, asparagine 104, asparagine 113, asparagine 221, asparagine 282, and asparagine 468 each carry an N-linked (GlcNAc...) asparagine glycan. Serine 616 (charge relay system) is an active-site residue. Asparagine 668 carries an N-linked (GlcNAc...) asparagine glycan. Catalysis depends on charge relay system residues aspartate 693 and histidine 728.

The protein belongs to the peptidase S9B family.

It is found in the secreted. The catalysed reaction is Release of an N-terminal dipeptide, Xaa-Yaa-|-Zaa-, from a polypeptide, preferentially when Yaa is Pro, provided Zaa is neither Pro nor hydroxyproline.. Extracellular dipeptidyl-peptidase which removes N-terminal dipeptides sequentially from polypeptides having unsubstituted N-termini provided that the penultimate residue is proline. This is Probable dipeptidyl peptidase 4 (dpp4) from Aspergillus clavatus (strain ATCC 1007 / CBS 513.65 / DSM 816 / NCTC 3887 / NRRL 1 / QM 1276 / 107).